Reading from the N-terminus, the 1096-residue chain is Carbamoyl phosphate synthase large chain (1096 aa).

The segment at 1–402 (MPKRDDINSV…ALQKALRSLE (402 aa)) is carboxyphosphate synthetic domain. ATP contacts are provided by arginine 129, arginine 169, glycine 175, glycine 176, glutamate 208, isoleucine 210, glutamate 215, glycine 241, valine 242, histidine 243, glutamine 285, and glutamate 299. Residues 133–328 (KDLVIESGAD…IAKIAAKLAI (196 aa)) enclose the ATP-grasp 1 domain. Residues glutamine 285, glutamate 299, and asparagine 301 each contribute to the Mg(2+) site. The Mn(2+) site is built by glutamine 285, glutamate 299, and asparagine 301. An oligomerization domain region spans residues 403 to 547 (KRGSSFHWGA…YSSYDSETEI (145 aa)). A carbamoyl phosphate synthetic domain region spans residues 548-950 (VPSDRRKVII…AFAKSQEAAF (403 aa)). Residues 676 to 870 (SGILDAAGLV…LAKAASLVMV (195 aa)) enclose the ATP-grasp 2 domain. ATP is bound by residues arginine 712, arginine 754, leucine 756, glutamate 761, glycine 786, isoleucine 787, histidine 788, serine 789, glutamine 829, and glutamate 841. Residues glutamine 829, glutamate 841, and asparagine 843 each contribute to the Mg(2+) site. Positions 829, 841, and 843 each coordinate Mn(2+). Positions 951 to 1095 (GGLPLSGTVF…QDYAIAREAR (145 aa)) constitute an MGS-like domain. The interval 951–1096 (GGLPLSGTVF…DYAIAREARR (146 aa)) is allosteric domain.

The protein belongs to the CarB family. Composed of two chains; the small (or glutamine) chain promotes the hydrolysis of glutamine to ammonia, which is used by the large (or ammonia) chain to synthesize carbamoyl phosphate. Tetramer of heterodimers (alpha,beta)4. The cofactor is Mg(2+). Requires Mn(2+) as cofactor.

It carries out the reaction hydrogencarbonate + L-glutamine + 2 ATP + H2O = carbamoyl phosphate + L-glutamate + 2 ADP + phosphate + 2 H(+). The enzyme catalyses hydrogencarbonate + NH4(+) + 2 ATP = carbamoyl phosphate + 2 ADP + phosphate + 2 H(+). The protein operates within amino-acid biosynthesis; L-arginine biosynthesis; carbamoyl phosphate from bicarbonate: step 1/1. It participates in pyrimidine metabolism; UMP biosynthesis via de novo pathway; (S)-dihydroorotate from bicarbonate: step 1/3. Large subunit of the glutamine-dependent carbamoyl phosphate synthetase (CPSase). CPSase catalyzes the formation of carbamoyl phosphate from the ammonia moiety of glutamine, carbonate, and phosphate donated by ATP, constituting the first step of 2 biosynthetic pathways, one leading to arginine and/or urea and the other to pyrimidine nucleotides. The large subunit (synthetase) binds the substrates ammonia (free or transferred from glutamine from the small subunit), hydrogencarbonate and ATP and carries out an ATP-coupled ligase reaction, activating hydrogencarbonate by forming carboxy phosphate which reacts with ammonia to form carbamoyl phosphate. This chain is Carbamoyl phosphate synthase large chain, found in Clavibacter sepedonicus (Clavibacter michiganensis subsp. sepedonicus).